Here is a 404-residue protein sequence, read N- to C-terminus: Cysteine desulfurase IscS (404 aa).

Pyridoxal 5'-phosphate contacts are provided by residues 75-76, Asn155, Gln183, and 203-205; these read AT and SAH. An N6-(pyridoxal phosphate)lysine modification is found at Lys206. Thr243 lines the pyridoxal 5'-phosphate pocket. The Cysteine persulfide intermediate role is filled by Cys328. Cys328 is a binding site for [2Fe-2S] cluster.

It belongs to the class-V pyridoxal-phosphate-dependent aminotransferase family. NifS/IscS subfamily. In terms of assembly, homodimer. Forms a heterotetramer with IscU, interacts with other sulfur acceptors. Pyridoxal 5'-phosphate is required as a cofactor.

The protein localises to the cytoplasm. The catalysed reaction is (sulfur carrier)-H + L-cysteine = (sulfur carrier)-SH + L-alanine. Its pathway is cofactor biosynthesis; iron-sulfur cluster biosynthesis. Its function is as follows. Master enzyme that delivers sulfur to a number of partners involved in Fe-S cluster assembly, tRNA modification or cofactor biosynthesis. Catalyzes the removal of elemental sulfur atoms from cysteine to produce alanine. Functions as a sulfur delivery protein for Fe-S cluster synthesis onto IscU, an Fe-S scaffold assembly protein, as well as other S acceptor proteins. The chain is Cysteine desulfurase IscS from Vibrio campbellii (strain ATCC BAA-1116).